The sequence spans 421 residues: Early growth response protein 2 (421 aa).

The span at 127-145 shows a compositional bias: low complexity; the sequence is CSSTSSSNASSGSPNLSCS. 3 disordered regions span residues 127 to 152, 179 to 200, and 223 to 288; these read CSST…PQSD, SPTA…ASDG, and SDRK…ERPY. Over residues 236 to 247 the composition is skewed to polar residues; the sequence is PLSTIRNFTLGG. 3 consecutive C2H2-type zinc fingers follow at residues 288 to 312, 318 to 340, and 346 to 368; these read YPCP…IRIH, FQCR…IRTH, and FACD…TKIH.

Belongs to the EGR C2H2-type zinc-finger protein family.

The protein localises to the nucleus. Its function is as follows. Sequence-specific DNA-binding transcription factor. The protein is Early growth response protein 2 (egr2) of Xenopus laevis (African clawed frog).